The sequence spans 158 residues: Phosphopantetheine adenylyltransferase (158 aa).

Residue Thr9 participates in substrate binding. Residues 9–10 (TF) and His17 contribute to the ATP site. The substrate site is built by Lys41, Leu73, and Arg87. Residues 88–90 (GVR), Glu98, and 123–129 (WSYVSST) each bind ATP.

The protein belongs to the bacterial CoaD family. In terms of assembly, homohexamer. It depends on Mg(2+) as a cofactor.

It is found in the cytoplasm. The catalysed reaction is (R)-4'-phosphopantetheine + ATP + H(+) = 3'-dephospho-CoA + diphosphate. It functions in the pathway cofactor biosynthesis; coenzyme A biosynthesis; CoA from (R)-pantothenate: step 4/5. In terms of biological role, reversibly transfers an adenylyl group from ATP to 4'-phosphopantetheine, yielding dephospho-CoA (dPCoA) and pyrophosphate. This Pasteurella multocida (strain Pm70) protein is Phosphopantetheine adenylyltransferase.